A 417-amino-acid polypeptide reads, in one-letter code: Gamma-glutamyl phosphate reductase (417 aa).

It belongs to the gamma-glutamyl phosphate reductase family.

It localises to the cytoplasm. It carries out the reaction L-glutamate 5-semialdehyde + phosphate + NADP(+) = L-glutamyl 5-phosphate + NADPH + H(+). It participates in amino-acid biosynthesis; L-proline biosynthesis; L-glutamate 5-semialdehyde from L-glutamate: step 2/2. In terms of biological role, catalyzes the NADPH-dependent reduction of L-glutamate 5-phosphate into L-glutamate 5-semialdehyde and phosphate. The product spontaneously undergoes cyclization to form 1-pyrroline-5-carboxylate. This chain is Gamma-glutamyl phosphate reductase, found in Escherichia coli O81 (strain ED1a).